Consider the following 369-residue polypeptide: CCA-adding enzyme (369 aa).

ATP-binding residues include Gly8 and Arg11. CTP is bound by residues Gly8 and Arg11. Mg(2+) is bound by residues Asp21 and Asp23. ATP-binding residues include Arg91, Arg137, and Arg140. Arg91, Arg137, and Arg140 together coordinate CTP.

This sequence belongs to the tRNA nucleotidyltransferase/poly(A) polymerase family. Bacterial CCA-adding enzyme type 2 subfamily. Mg(2+) serves as cofactor.

It catalyses the reaction a tRNA precursor + 2 CTP + ATP = a tRNA with a 3' CCA end + 3 diphosphate. The catalysed reaction is a tRNA with a 3' CCA end + 2 CTP + ATP = a tRNA with a 3' CCACCA end + 3 diphosphate. Its function is as follows. Catalyzes the addition and repair of the essential 3'-terminal CCA sequence in tRNAs without using a nucleic acid template. Adds these three nucleotides in the order of C, C, and A to the tRNA nucleotide-73, using CTP and ATP as substrates and producing inorganic pyrophosphate. tRNA 3'-terminal CCA addition is required both for tRNA processing and repair. Also involved in tRNA surveillance by mediating tandem CCA addition to generate a CCACCA at the 3' terminus of unstable tRNAs. While stable tRNAs receive only 3'-terminal CCA, unstable tRNAs are marked with CCACCA and rapidly degraded. This chain is CCA-adding enzyme, found in Francisella tularensis subsp. novicida (strain U112).